The primary structure comprises 418 residues: Putative F-box protein At1g20795 (418 aa).

Residues 1–46 (METLGLPLPLFEKILFRLDPISLVMMKCTRRSFNSHISEDPYFKSK) form the F-box domain.

The chain is Putative F-box protein At1g20795 from Arabidopsis thaliana (Mouse-ear cress).